The following is a 391-amino-acid chain: NADH-quinone oxidoreductase subunit D (391 aa).

Belongs to the complex I 49 kDa subunit family. In terms of assembly, NDH-1 is composed of 14 different subunits. Subunits NuoB, C, D, E, F, and G constitute the peripheral sector of the complex.

It is found in the cell inner membrane. The enzyme catalyses a quinone + NADH + 5 H(+)(in) = a quinol + NAD(+) + 4 H(+)(out). Its function is as follows. NDH-1 shuttles electrons from NADH, via FMN and iron-sulfur (Fe-S) centers, to quinones in the respiratory chain. The immediate electron acceptor for the enzyme in this species is believed to be ubiquinone. Couples the redox reaction to proton translocation (for every two electrons transferred, four hydrogen ions are translocated across the cytoplasmic membrane), and thus conserves the redox energy in a proton gradient. This chain is NADH-quinone oxidoreductase subunit D, found in Rickettsia rickettsii (strain Sheila Smith).